Reading from the N-terminus, the 414-residue chain is Enolase (414 aa).

Gln-162 is a (2R)-2-phosphoglycerate binding site. Glu-204 acts as the Proton donor in catalysis. Mg(2+)-binding residues include Asp-239, Glu-280, and Asp-307. Residues Lys-332, Arg-361, Ser-362, and Lys-383 each contribute to the (2R)-2-phosphoglycerate site. Lys-332 functions as the Proton acceptor in the catalytic mechanism.

Belongs to the enolase family. Requires Mg(2+) as cofactor.

It is found in the cytoplasm. It localises to the secreted. The protein resides in the cell surface. It catalyses the reaction (2R)-2-phosphoglycerate = phosphoenolpyruvate + H2O. The protein operates within carbohydrate degradation; glycolysis; pyruvate from D-glyceraldehyde 3-phosphate: step 4/5. In terms of biological role, catalyzes the reversible conversion of 2-phosphoglycerate (2-PG) into phosphoenolpyruvate (PEP). It is essential for the degradation of carbohydrates via glycolysis. This is Enolase from Campylobacter jejuni subsp. doylei (strain ATCC BAA-1458 / RM4099 / 269.97).